We begin with the raw amino-acid sequence, 167 residues long: uncharacterized protein (167 aa).

A coiled-coil region spans residues 70-118; it reads KIVELRKAMESIITELAYIKGELKGLQEKGESKVERKEIIEEKIQKAMV. A compositionally biased stretch (basic and acidic residues) spans 128 to 155; the sequence is EKEERKPAKESKRREHDVIIPEGKKEER. The interval 128–167 is disordered; the sequence is EKEERKPAKESKRREHDVIIPEGKKEERTDDGEDGLIVCD.

This is an uncharacterized protein from Archaeoglobus fulgidus (strain ATCC 49558 / DSM 4304 / JCM 9628 / NBRC 100126 / VC-16).